The primary structure comprises 555 residues: Oxamate carbamoyltransferase subunit AllF (555 aa).

This sequence belongs to the AllF family. As to quaternary structure, the OXTCase is composed of 3 subunits, AllF, AllG and AllH. Requires Mg(2+) as cofactor.

It catalyses the reaction oxamate + carbamoyl phosphate = N-carbamoyl-2-oxoglycine + phosphate. It participates in nitrogen metabolism; (S)-allantoin degradation. Functionally, component of a carbamoyltransferase involved in the anaerobic nitrogen utilization via the assimilation of allantoin. Catalyzes the conversion of oxalurate (N-carbamoyl-2-oxoglycine) to oxamate and carbamoyl phosphate. This Escherichia coli (strain K12) protein is Oxamate carbamoyltransferase subunit AllF.